The following is a 322-amino-acid chain: DNA repair and recombination protein RadA (322 aa).

Residue 105-112 participates in ATP binding; it reads GMFGSGKT.

This sequence belongs to the eukaryotic RecA-like protein family.

Its function is as follows. Involved in DNA repair and in homologous recombination. Binds and assemble on single-stranded DNA to form a nucleoprotein filament. Hydrolyzes ATP in a ssDNA-dependent manner and promotes DNA strand exchange between homologous DNA molecules. The polypeptide is DNA repair and recombination protein RadA (Methanococcus maripaludis (Methanococcus deltae)).